A 391-amino-acid chain; its full sequence is Succinyl-diaminopimelate desuccinylase (391 aa).

Histidine 67 is a binding site for Zn(2+). Aspartate 69 is a catalytic residue. Aspartate 101 provides a ligand contact to Zn(2+). The active-site Proton acceptor is glutamate 135. Zn(2+)-binding residues include glutamate 136, glutamate 164, and histidine 353.

This sequence belongs to the peptidase M20A family. DapE subfamily. Homodimer. Zn(2+) serves as cofactor. Co(2+) is required as a cofactor.

It carries out the reaction N-succinyl-(2S,6S)-2,6-diaminopimelate + H2O = (2S,6S)-2,6-diaminopimelate + succinate. The protein operates within amino-acid biosynthesis; L-lysine biosynthesis via DAP pathway; LL-2,6-diaminopimelate from (S)-tetrahydrodipicolinate (succinylase route): step 3/3. Functionally, catalyzes the hydrolysis of N-succinyl-L,L-diaminopimelic acid (SDAP), forming succinate and LL-2,6-diaminopimelate (DAP), an intermediate involved in the bacterial biosynthesis of lysine and meso-diaminopimelic acid, an essential component of bacterial cell walls. The protein is Succinyl-diaminopimelate desuccinylase of Rickettsia bellii (strain RML369-C).